The primary structure comprises 37 residues: Large ribosomal subunit protein bL36 (37 aa).

Belongs to the bacterial ribosomal protein bL36 family.

This Cutibacterium acnes (strain DSM 16379 / KPA171202) (Propionibacterium acnes) protein is Large ribosomal subunit protein bL36.